The chain runs to 437 residues: UDP-N-acetylmuramate--L-alanine ligase (437 aa).

108–114 (GAHGKTS) is an ATP binding site.

It belongs to the MurCDEF family.

Its subcellular location is the cytoplasm. The enzyme catalyses UDP-N-acetyl-alpha-D-muramate + L-alanine + ATP = UDP-N-acetyl-alpha-D-muramoyl-L-alanine + ADP + phosphate + H(+). The protein operates within cell wall biogenesis; peptidoglycan biosynthesis. Its function is as follows. Cell wall formation. The protein is UDP-N-acetylmuramate--L-alanine ligase of Staphylococcus saprophyticus subsp. saprophyticus (strain ATCC 15305 / DSM 20229 / NCIMB 8711 / NCTC 7292 / S-41).